The sequence spans 250 residues: MGRGRVELKRIENKINRQVTFAKRRNGLLKKAYELSILCDAEVALIIFSSRGKLYEFSSASSMMTTLEKYQQCSYASLDPMLPVSDTQMNYNEYVRLKARVELLQRSQRHILGEDLGTLNSKELEQLEHQLDASLKKVRSKKTQSMLDQLADLQEKEQMLEEANKQLKNKLEESAARIPLGLSWGNNGGQTMEYNRLPPQTTAQPFFQPLRLNSSSPQFGYNPNMGANDHEVNAATTAHNINGFIPGWML.

Residues 1-61 (MGRGRVELKR…GKLYEFSSAS (61 aa)) enclose the MADS-box domain. In terms of domain architecture, K-box spans 87–177 (TQMNYNEYVR…KNKLEESAAR (91 aa)).

Its subcellular location is the nucleus. In terms of biological role, MADS-box transcription factor that acts redundantly with EJ2 to control meristem maturation and inflorescence architecture. The protein is MADS-box protein J2 of Solanum lycopersicum (Tomato).